A 214-amino-acid chain; its full sequence is Octanoyltransferase (214 aa).

The region spanning 34 to 214 (GLQKELVWLL…KFNEIFSSFN (181 aa)) is the BPL/LPL catalytic domain. Substrate is bound by residues 73–80 (RGGKYTYH), 145–147 (AFG), and 158–160 (GVS). Cysteine 176 acts as the Acyl-thioester intermediate in catalysis.

It belongs to the LipB family.

It is found in the cytoplasm. It catalyses the reaction octanoyl-[ACP] + L-lysyl-[protein] = N(6)-octanoyl-L-lysyl-[protein] + holo-[ACP] + H(+). It functions in the pathway protein modification; protein lipoylation via endogenous pathway; protein N(6)-(lipoyl)lysine from octanoyl-[acyl-carrier-protein]: step 1/2. Its function is as follows. Catalyzes the transfer of endogenously produced octanoic acid from octanoyl-acyl-carrier-protein onto the lipoyl domains of lipoate-dependent enzymes. Lipoyl-ACP can also act as a substrate although octanoyl-ACP is likely to be the physiological substrate. In Ehrlichia canis (strain Jake), this protein is Octanoyltransferase.